We begin with the raw amino-acid sequence, 68 residues long: ATP synthase F(0) complex subunit 8 (68 aa).

The helical transmembrane segment at 8-24 threads the bilayer; it reads TWSITIVSMIITLFIMF. N6-acetyllysine; alternate is present on K54. K54 carries the N6-succinyllysine; alternate modification. K57 is subject to N6-acetyllysine.

It belongs to the ATPase protein 8 family. In terms of assembly, component of the ATP synthase complex composed at least of ATP5F1A/subunit alpha, ATP5F1B/subunit beta, ATP5MC1/subunit c (homooctomer), MT-ATP6/subunit a, MT-ATP8/subunit 8, ATP5ME/subunit e, ATP5MF/subunit f, ATP5MG/subunit g, ATP5MK/subunit k, ATP5MJ/subunit j, ATP5F1C/subunit gamma, ATP5F1D/subunit delta, ATP5F1E/subunit epsilon, ATP5PF/subunit F6, ATP5PB/subunit b, ATP5PD/subunit d, ATP5PO/subunit OSCP. ATP synthase complex consists of a soluble F(1) head domain (subunits alpha(3) and beta(3)) - the catalytic core - and a membrane F(0) domain - the membrane proton channel (subunits c, a, 8, e, f, g, k and j). These two domains are linked by a central stalk (subunits gamma, delta, and epsilon) rotating inside the F1 region and a stationary peripheral stalk (subunits F6, b, d, and OSCP). Interacts with PRICKLE3.

The protein localises to the mitochondrion membrane. Its function is as follows. Subunit 8, of the mitochondrial membrane ATP synthase complex (F(1)F(0) ATP synthase or Complex V) that produces ATP from ADP in the presence of a proton gradient across the membrane which is generated by electron transport complexes of the respiratory chain. ATP synthase complex consist of a soluble F(1) head domain - the catalytic core - and a membrane F(1) domain - the membrane proton channel. These two domains are linked by a central stalk rotating inside the F(1) region and a stationary peripheral stalk. During catalysis, ATP synthesis in the catalytic domain of F(1) is coupled via a rotary mechanism of the central stalk subunits to proton translocation. In vivo, can only synthesize ATP although its ATP hydrolase activity can be activated artificially in vitro. Part of the complex F(0) domain. This is ATP synthase F(0) complex subunit 8 from Ceratotherium simum (White rhinoceros).